Consider the following 128-residue polypeptide: Photosystem II reaction center Psb28 protein (128 aa).

A disordered region spans residues 109–128 (SGLGYSQDSGEAPASDSSNG). Positions 111–128 (LGYSQDSGEAPASDSSNG) are enriched in polar residues.

The protein belongs to the Psb28 family. In terms of assembly, part of the photosystem II complex.

The protein localises to the cellular thylakoid membrane. The chain is Photosystem II reaction center Psb28 protein from Synechococcus sp. (strain CC9311).